The following is a 59-amino-acid chain: Large ribosomal subunit protein uL30 (59 aa).

Belongs to the universal ribosomal protein uL30 family. As to quaternary structure, part of the 50S ribosomal subunit.

The chain is Large ribosomal subunit protein uL30 from Sodalis glossinidius (strain morsitans).